Reading from the N-terminus, the 469-residue chain is Regulator of G-protein signaling 7 (469 aa).

A DEP domain is found at 37–112 (EKNGIPIRTV…DDGTFYRFQT (76 aa)). Residues Ser-229 and Ser-241 each carry the phosphoserine modification. The segment at 235-256 (NDIRSHSPTHTPTPETKPPTED) is disordered. A Phosphothreonine modification is found at Thr-243. The G protein gamma domain occupies 255 to 316 (EDELQQQIKY…LSDDTTFWEL (62 aa)). The RGS domain maps to 333–448 (GMDEALKDPV…IRSSAYQELL (116 aa)). Ser-434 is subject to Phosphoserine.

In terms of assembly, interacts with GNB5, forming the RGS7-GNB5 complex. Interacts with GPR158; promotes the GTPase activator activity of the RGS7-GNB5 complex in absence of glycine, in contrast GTPase activator activity of the RGS7-GNB5 complex is inhibited in presence of glycine. Interacts with GPR179. Interacts with PKD1; this prevents rapid proteasomal degradation. Interacts with RGS7BP, leading to regulate the subcellular location of the heterodimer formed with GNB5. Interacts (phosphorylated form) with 14-3-3 protein YWHAQ. Interacts with SNAPIN. Interacts with GNAI1. Interacts with GNAO1, GNAI3 and GNAZ. Post-translationally, palmitoylated. Ubiquitinated, leading to rapid proteasomal degradation. In terms of processing, phosphorylation and subsequent interaction with 14-3-3 proteins inhibits GAP activity. In terms of tissue distribution, detected in retina (at protein level).

The protein localises to the cytoplasm. The protein resides in the cytosol. It localises to the cell membrane. It is found in the membrane. Its function is as follows. GTPase activator component of the RGS7-GNB5 complex that regulates G protein-coupled receptor signaling cascades. The RGS7-GNB5 complex acts as an inhibitor signal transduction by promoting the GTPase activity of G protein alpha subunits, such as GNAO1, thereby driving them into their inactive GDP-bound form. May play a role in synaptic vesicle exocytosis. Glycine-dependent regulation of the RGS7-GNB5 complex by GPR158 affects mood and cognition via its ability to regulate neuronal excitability in L2/L3 pyramidal neurons of the prefrontal cortex. Modulates the activity of potassium channels that are activated by GNAO1 in response to muscarinic acetylcholine receptor M2/CHRM2 signaling. The polypeptide is Regulator of G-protein signaling 7 (RGS7) (Bos taurus (Bovine)).